Reading from the N-terminus, the 234-residue chain is Carboxy-S-adenosyl-L-methionine synthase (234 aa).

Residues Tyr35, 60–62 (GSS), 83–84 (DN), Asn124, and Arg191 contribute to the S-adenosyl-L-methionine site.

Belongs to the class I-like SAM-binding methyltransferase superfamily. Cx-SAM synthase family. As to quaternary structure, homodimer.

It catalyses the reaction prephenate + S-adenosyl-L-methionine = carboxy-S-adenosyl-L-methionine + 3-phenylpyruvate + H2O. In terms of biological role, catalyzes the conversion of S-adenosyl-L-methionine (SAM) to carboxy-S-adenosyl-L-methionine (Cx-SAM). The sequence is that of Carboxy-S-adenosyl-L-methionine synthase from Nautilia profundicola (strain ATCC BAA-1463 / DSM 18972 / AmH).